We begin with the raw amino-acid sequence, 309 residues long: Phosphoserine phosphatase (309 aa).

Residue Asp97 is the Nucleophile of the active site. Residues Asp97 and Asp99 each coordinate Mg(2+). Asp99 (proton donor) is an active-site residue. Residues Glu106, Arg142, 186–187, and Lys232 each bind substrate; that span reads SG. Asp255 is a binding site for Mg(2+). Asn258 contacts substrate.

This sequence belongs to the HAD-like hydrolase superfamily. SerB family. Mg(2+) serves as cofactor.

It carries out the reaction O-phospho-L-serine + H2O = L-serine + phosphate. The enzyme catalyses O-phospho-D-serine + H2O = D-serine + phosphate. Its pathway is amino-acid biosynthesis; L-serine biosynthesis; L-serine from 3-phospho-D-glycerate: step 3/3. The protein is Phosphoserine phosphatase (SER2) of Saccharomyces cerevisiae (strain ATCC 204508 / S288c) (Baker's yeast).